Consider the following 151-residue polypeptide: Arginine repressor (151 aa).

The protein belongs to the ArgR family.

The protein resides in the cytoplasm. The protein operates within amino-acid biosynthesis; L-arginine biosynthesis [regulation]. In terms of biological role, regulates arginine biosynthesis genes. The chain is Arginine repressor from Lachnospira eligens (strain ATCC 27750 / DSM 3376 / VPI C15-48 / C15-B4) (Eubacterium eligens).